The following is a 692-amino-acid chain: Glycine--tRNA ligase beta subunit (692 aa).

The protein belongs to the class-II aminoacyl-tRNA synthetase family. In terms of assembly, tetramer of two alpha and two beta subunits.

The protein resides in the cytoplasm. The enzyme catalyses tRNA(Gly) + glycine + ATP = glycyl-tRNA(Gly) + AMP + diphosphate. This chain is Glycine--tRNA ligase beta subunit, found in Limosilactobacillus fermentum (strain NBRC 3956 / LMG 18251) (Lactobacillus fermentum).